Consider the following 308-residue polypeptide: uncharacterized protein (308 aa).

This is an uncharacterized protein from Escherichia coli (strain K12).